The following is a 399-amino-acid chain: Glucose-1-phosphate adenylyltransferase (399 aa).

Residues Gly158, 174-175, and Ser192 contribute to the alpha-D-glucose 1-phosphate site; that span reads EK.

It belongs to the bacterial/plant glucose-1-phosphate adenylyltransferase family. As to quaternary structure, homotetramer.

The catalysed reaction is alpha-D-glucose 1-phosphate + ATP + H(+) = ADP-alpha-D-glucose + diphosphate. It functions in the pathway glycan biosynthesis; glycogen biosynthesis. In terms of biological role, involved in the biosynthesis of ADP-glucose, a building block required for the elongation reactions to produce glycogen. Catalyzes the reaction between ATP and alpha-D-glucose 1-phosphate (G1P) to produce pyrophosphate and ADP-Glc. This chain is Glucose-1-phosphate adenylyltransferase, found in Streptomyces coelicolor (strain ATCC BAA-471 / A3(2) / M145).